A 289-amino-acid polypeptide reads, in one-letter code: 4-diphosphocytidyl-2-C-methyl-D-erythritol kinase (289 aa).

K16 is an active-site residue. P99–S109 provides a ligand contact to ATP. Residue D141 is part of the active site.

Belongs to the GHMP kinase family. IspE subfamily.

It catalyses the reaction 4-CDP-2-C-methyl-D-erythritol + ATP = 4-CDP-2-C-methyl-D-erythritol 2-phosphate + ADP + H(+). It participates in isoprenoid biosynthesis; isopentenyl diphosphate biosynthesis via DXP pathway; isopentenyl diphosphate from 1-deoxy-D-xylulose 5-phosphate: step 3/6. Functionally, catalyzes the phosphorylation of the position 2 hydroxy group of 4-diphosphocytidyl-2C-methyl-D-erythritol. This chain is 4-diphosphocytidyl-2-C-methyl-D-erythritol kinase, found in Ralstonia nicotianae (strain ATCC BAA-1114 / GMI1000) (Ralstonia solanacearum).